Here is a 459-residue protein sequence, read N- to C-terminus: Fibrinogen C domain-containing protein 1 (459 aa).

The tract at residues Met-1–Lys-22 is disordered. Over Met-1–Cys-33 the chain is Cytoplasmic. Residues Thr-34 to Leu-54 form a helical; Signal-anchor for type II membrane protein membrane-spanning segment. The Extracellular segment spans residues Asn-55–Arg-459. The region spanning Cys-233–Arg-456 is the Fibrinogen C-terminal domain. Cys-242 and Cys-271 are oxidised to a cystine. Asn-338 carries N-linked (GlcNAc...) asparagine glycosylation. Ca(2+)-binding residues include Asp-391 and Asp-393. Cysteines 399 and 412 form a disulfide.

In terms of assembly, homotetramer; disulfide-linked.

The protein resides in the membrane. In terms of biological role, acetyl group-binding receptor which shows a high-affinity and calcium-dependent binding to acetylated structures such as chitin, some N-acetylated carbohydrates, and amino acids, but not to their non-acetylated counterparts. Can facilitate the endocytosis of acetylated components. The protein is Fibrinogen C domain-containing protein 1 (Fibcd1) of Mus musculus (Mouse).